Consider the following 128-residue polypeptide: Large ribosomal subunit protein bL12 (128 aa).

It belongs to the bacterial ribosomal protein bL12 family. As to quaternary structure, homodimer. Part of the ribosomal stalk of the 50S ribosomal subunit. Forms a multimeric L10(L12)X complex, where L10 forms an elongated spine to which 2 to 4 L12 dimers bind in a sequential fashion. Binds GTP-bound translation factors.

Its function is as follows. Forms part of the ribosomal stalk which helps the ribosome interact with GTP-bound translation factors. Is thus essential for accurate translation. This Kocuria rhizophila (strain ATCC 9341 / DSM 348 / NBRC 103217 / DC2201) protein is Large ribosomal subunit protein bL12.